We begin with the raw amino-acid sequence, 186 residues long: Probable chorismate pyruvate-lyase (186 aa).

Positions 80, 118, and 170 each coordinate substrate.

This sequence belongs to the UbiC family.

The protein resides in the cytoplasm. The catalysed reaction is chorismate = 4-hydroxybenzoate + pyruvate. It participates in cofactor biosynthesis; ubiquinone biosynthesis. Functionally, removes the pyruvyl group from chorismate, with concomitant aromatization of the ring, to provide 4-hydroxybenzoate (4HB) for the ubiquinone pathway. The polypeptide is Probable chorismate pyruvate-lyase (Pseudomonas syringae pv. tomato (strain ATCC BAA-871 / DC3000)).